Here is a 377-residue protein sequence, read N- to C-terminus: tRNA pseudouridine synthase Pus10 (377 aa).

The Nucleophile role is filled by aspartate 206. The substrate site is built by tyrosine 270 and tyrosine 339.

Belongs to the pseudouridine synthase Pus10 family.

It carries out the reaction uridine(54) in tRNA = pseudouridine(54) in tRNA. The enzyme catalyses uridine(55) in tRNA = pseudouridine(55) in tRNA. Responsible for synthesis of pseudouridine from uracil-54 and uracil-55 in the psi GC loop of transfer RNAs. This is tRNA pseudouridine synthase Pus10 from Picrophilus torridus (strain ATCC 700027 / DSM 9790 / JCM 10055 / NBRC 100828 / KAW 2/3).